The chain runs to 514 residues: 2,3-bisphosphoglycerate-independent phosphoglycerate mutase (514 aa).

Residues aspartate 13 and serine 63 each coordinate Mn(2+). Serine 63 functions as the Phosphoserine intermediate in the catalytic mechanism. Residues histidine 124, 154–155 (RD), arginine 186, arginine 192, 258–261 (RADR), and lysine 332 each bind substrate. Residues aspartate 399, histidine 403, aspartate 440, histidine 441, and histidine 459 each coordinate Mn(2+).

It belongs to the BPG-independent phosphoglycerate mutase family. Monomer. It depends on Mn(2+) as a cofactor.

The enzyme catalyses (2R)-2-phosphoglycerate = (2R)-3-phosphoglycerate. It functions in the pathway carbohydrate degradation; glycolysis; pyruvate from D-glyceraldehyde 3-phosphate: step 3/5. In terms of biological role, catalyzes the interconversion of 2-phosphoglycerate and 3-phosphoglycerate. This Legionella pneumophila (strain Corby) protein is 2,3-bisphosphoglycerate-independent phosphoglycerate mutase.